A 1345-amino-acid chain; its full sequence is MVYSYSEKKRIRKDFGKRPQVLDIPYLLSIQLDSFKKFTDQDPTGERGLEAAFRSVFPIKSFSGNSELQYVSYKLGEPVFDVKECQIRGVTYSAPLRVKLRMVLYDREAAAGTVKDIKEQEVYMGDIPLMTDNGTFVINGTERVIVSQLHRSPGVFFDHDRGKTHSSGKVLYNARIIPYRGSWLDFEFDPKDALFVRIDRRRKLPATIILRALEYSTQEILDLFFERVEFKIKKDTLVMTLVPERLRGETASYDIKDAEGSVLVEAGRRITARHIRQLEKTNTTELEVPVEYIVGKYAAQDYIDPDTGEVLVSANSEISLEDLAKLSLAGIKELSTLYINELDHGAYISDTLRIDPTTNRLEALVEIYRMMRPGEPPTKDAAEALFQNLFFSEERYDLSKVGRMKFNRRLSIPDDEGSGVLSKEDIVAVMKNIIHIRNGFDEVDDIDHLGNRRIRSVGEMAENQFRVGLVRVERAVRERLSLGDLNELMPQDLINAKPISAAVKEFFGSSQLSQFMDQNNPLSEVTHKRRISALGPGGLTRERAGFEVRDVHPTHYGRLCPIETPEGPNIGLINSLASFARTNSYGFLETPYRKVVDGVITDDVEYLSAIEEGRYVIAQANIEVDSQGRMVEEQIACRHKGESTFMRASDIQYMDVSPQQIISVAASLIPFLEHDDANRALMGANMQRQAVPTLKSEKPLVGTGIERTLAVDSGVVVAAKRGGVIDYVDASRIVVKVNEDELRPGEAGIDIYNLTKYTRSNQNTCINQRPCCSVGEPVVRGDVLADGPSTDLGDLALGQNMRIAFMPWNGYNFEDSILISERVAQEDRFTTIHIQELSCIARDTKLGSEEITADIPNVGESALSKLDESGIVYIGAEVKGGDILVGKVTPKGETQLTPEEKLLRAIFGEKASDVKDSSLRVPNSVKGTIIDVQVFTRDGVEKDKRAIEIEEMHIAQARKDLGEEFKILEEGVLSRARNLLLSAGFTEAQIAALPRKDVLVQVIDDETKQTELEQLAEQHEELKADFDKKFEIKRRKITQGDDLAPGVLKIVKVYLAVKRTIQPGDKMAGRHGNKGVISKINPIEDMPYDEQGNPVDIVLNPLGVPSRMNIGQVLEVHLGAAAKGIGNKIAAMLEDQREKGLAEVRSYIKQVYELGDEVQQRVDIDSFTDDELLRLANNLKGGIPVATPAFDGAKEKEIKQMLELAGLPTSGQLKLFDGRTGNEFERPVTVGYMYMLKLNHLVDDKMHARSTGSYSLVTQQPLGGKAQFGGQRFGEMEVWALEAYGAAYTLQEMLTVKSDDVNGRTQMYKNIVDGNHQMQPGMPESFNVLLKEIRSLGINIELDQE.

It belongs to the RNA polymerase beta chain family. The RNAP catalytic core consists of 2 alpha, 1 beta, 1 beta' and 1 omega subunit. When a sigma factor is associated with the core the holoenzyme is formed, which can initiate transcription.

The catalysed reaction is RNA(n) + a ribonucleoside 5'-triphosphate = RNA(n+1) + diphosphate. In terms of biological role, DNA-dependent RNA polymerase catalyzes the transcription of DNA into RNA using the four ribonucleoside triphosphates as substrates. In Shewanella sp. (strain MR-4), this protein is DNA-directed RNA polymerase subunit beta.